Reading from the N-terminus, the 419-residue chain is Enolase (419 aa).

Gln161 lines the (2R)-2-phosphoglycerate pocket. Glu205 (proton donor) is an active-site residue. Mg(2+) contacts are provided by Asp240, Glu283, and Asp309. (2R)-2-phosphoglycerate is bound by residues Lys334, Arg363, Ser364, and Lys385. The active-site Proton acceptor is the Lys334.

Belongs to the enolase family. Mg(2+) is required as a cofactor.

The protein localises to the cytoplasm. The protein resides in the secreted. Its subcellular location is the cell surface. It carries out the reaction (2R)-2-phosphoglycerate = phosphoenolpyruvate + H2O. It participates in carbohydrate degradation; glycolysis; pyruvate from D-glyceraldehyde 3-phosphate: step 4/5. Catalyzes the reversible conversion of 2-phosphoglycerate (2-PG) into phosphoenolpyruvate (PEP). It is essential for the degradation of carbohydrates via glycolysis. The polypeptide is Enolase (Saccharolobus islandicus (strain Y.N.15.51 / Yellowstone #2) (Sulfolobus islandicus)).